The primary structure comprises 241 residues: Probable septum site-determining protein MinC (241 aa).

It belongs to the MinC family. In terms of assembly, interacts with MinD and FtsZ.

Its function is as follows. Cell division inhibitor that blocks the formation of polar Z ring septums. Rapidly oscillates between the poles of the cell to destabilize FtsZ filaments that have formed before they mature into polar Z rings. Prevents FtsZ polymerization. This is Probable septum site-determining protein MinC from Rhizobium rhizogenes (strain K84 / ATCC BAA-868) (Agrobacterium radiobacter).